Reading from the N-terminus, the 494-residue chain is Cysteine--tRNA ligase (494 aa).

Residue Cys29 coordinates Zn(2+). Positions 31 to 41 (LTVSDDAHLGH) match the 'HIGH' region motif. Residues 187-220 (KAGGVSPDDANTHRDDELPPLDGERGQTWASPWG) form a disordered region. Over residues 196–211 (ANTHRDDELPPLDGER) the composition is skewed to basic and acidic residues. Cys230, His255, and Glu259 together coordinate Zn(2+). Positions 287-291 (KMSSS) match the 'KMSKS' region motif.

Belongs to the class-I aminoacyl-tRNA synthetase family. Requires Zn(2+) as cofactor.

It localises to the cytoplasm. It catalyses the reaction tRNA(Cys) + L-cysteine + ATP = L-cysteinyl-tRNA(Cys) + AMP + diphosphate. This Halobacterium salinarum (strain ATCC 700922 / JCM 11081 / NRC-1) (Halobacterium halobium) protein is Cysteine--tRNA ligase.